We begin with the raw amino-acid sequence, 866 residues long: Probable outer membrane usher protein ElfC (866 aa).

A signal peptide spans 1–35 (MYRTHRQHSLLSSGGVPSFIGGLVVFVSAAFNAQA).

Belongs to the fimbrial export usher family.

The protein localises to the cell outer membrane. Functionally, part of the elfADCG-ycbUVF fimbrial operon, which promotes adhesion of bacteria to different abiotic surfaces. Could be involved in the export and assembly of the ElfA fimbrial subunits across the outer membrane. This is Probable outer membrane usher protein ElfC (elfC) from Escherichia coli (strain K12).